The following is a 159-amino-acid chain: Phosphopantetheine adenylyltransferase (159 aa).

T10 contributes to the substrate binding site. ATP-binding positions include 10–11 and H18; that span reads TF. 3 residues coordinate substrate: K42, M74, and R88. ATP is bound by residues 89-91, E99, and 124-130; these read GLR and WSFISSS.

This sequence belongs to the bacterial CoaD family. In terms of assembly, homohexamer. Mg(2+) serves as cofactor.

It is found in the cytoplasm. The enzyme catalyses (R)-4'-phosphopantetheine + ATP + H(+) = 3'-dephospho-CoA + diphosphate. Its pathway is cofactor biosynthesis; coenzyme A biosynthesis; CoA from (R)-pantothenate: step 4/5. Functionally, reversibly transfers an adenylyl group from ATP to 4'-phosphopantetheine, yielding dephospho-CoA (dPCoA) and pyrophosphate. This chain is Phosphopantetheine adenylyltransferase, found in Enterobacter sp. (strain 638).